The sequence spans 617 residues: Prothrombin (617 aa).

The signal sequence occupies residues 1–24 (MLHVRGLGLPGCLALAALASLVHS). A propeptide spanning residues 25 to 43 (QHVFLAPQQALSLLQRVRR) is cleaved from the precursor. A Gla domain is found at 44-90 (ANSGFLEELRKGNLERECVEEQCSYEEAFEALESPQDTDVFWAKYTV). Glu50, Glu51, Glu58, Glu60, Glu63, Glu64, Glu69, Glu70, Glu73, and Glu76 each carry 4-carboxyglutamate. A disulfide bridge connects residues Cys61 and Cys66. 10 cysteine pairs are disulfide-bonded: Cys91/Cys104, Cys109/Cys187, Cys130/Cys170, Cys158/Cys182, Cys215/Cys292, Cys236/Cys276, Cys264/Cys287, Cys332/Cys478, Cys387/Cys403, and Cys532/Cys546. Kringle domains follow at residues 109–187 (CAMD…IPVC) and 215–292 (CLLE…LNYC). Residues Asn120 and Asn144 are each glycosylated (N-linked (GlcNAc...) asparagine). The Peptidase S1 domain maps to 360-614 (IVEGWDAEKG…LKRWMQKVID (255 aa)). Catalysis depends on His402, which acts as the Charge relay system. Asn412 carries an N-linked (GlcNAc...) asparagine glycan. Asp458 acts as the Charge relay system in catalysis. The tract at residues 547–569 (AGFKVNDTKRGDACEGDSGGPFV) is high affinity receptor-binding region which is also known as the TP508 peptide. N-linked (GlcNAc...) asparagine glycosylation is present at Asn552. Cys560 and Cys590 are disulfide-bonded. Ser564 acts as the Charge relay system in catalysis.

The protein belongs to the peptidase S1 family. In terms of assembly, heterodimer (named alpha-thrombin) of a light and a heavy chain; disulfide-linked. Forms a heterodimer with SERPINA5. In plasma, interacts (via N-terminus) with alpha-1-microglobulin; this interaction does not prevent the activation of prothrombin to thrombin. In terms of processing, the gamma-carboxyglutamyl residues, which bind calcium ions, result from the carboxylation of glutamyl residues by a microsomal enzyme, the vitamin K-dependent carboxylase. The modified residues are necessary for the calcium-dependent interaction with a negatively charged phospholipid surface, which is essential for the conversion of prothrombin to thrombin. In the penultimate step of the coagulation cascade, prothrombin is converted to thrombin by the prothrombinase complex composed of factor Xa (F10), cofactor Va (F5), and phospholipids. This activation requires factor Xa-catalyzed sequential cleavage at 2 sites, Arg-310 and Arg-359, along 2 possible pathways. In the first pathway, the first cleavage occurs at Arg-310, leading to the formation of the inactive intermediate prethrombin-2. This pathway preferentially occurs on platelets and in the absence of cofactor Va. In the second pathway, the first cleavage occurs at Arg-359, which separates protease domain into 2 chains that remain connected through a disulfide bond and generates the active intermediate meizothrombin. The presence of cofactor Va directs activation along the meizothrombin pathway and greatly accelerates the rate of cleavage at Arg-359, but has a smaller effect on the cleavage of meizothrombin at Arg-310. Meizothrombin accumulates as an intermediate when prothrombinase is assembled on the membrane of red blood cells.

It carries out the reaction Selective cleavage of Arg-|-Gly bonds in fibrinogen to form fibrin and release fibrinopeptides A and B.. With respect to regulation, activity is promoted in the presence of negatively charged surfaces, such as polyphosphate and dextran sulfate. Inhibited by SERPINA5. In terms of biological role, thrombin, which cleaves bonds after Arg and Lys, converts fibrinogen to fibrin and activates factors V, VII, VIII, XIII, and, in complex with thrombomodulin, protein C. Functions in blood homeostasis, inflammation and wound healing. Activates coagulation factor XI (F11); activation is promoted by the contact with negatively charged surfaces. Triggers the production of pro-inflammatory cytokines, such as MCP-1/CCL2 and IL8/CXCL8, in endothelial cells. The protein is Prothrombin (F2) of Rattus norvegicus (Rat).